A 685-amino-acid polypeptide reads, in one-letter code: DNA-directed RNA polymerase subunit beta' (685 aa).

Residues C69, C71, C87, and C90 each contribute to the Zn(2+) site. Residues D489, D491, and D493 each contribute to the Mg(2+) site.

Belongs to the RNA polymerase beta' chain family. RpoC1 subfamily. In plastids the minimal PEP RNA polymerase catalytic core is composed of four subunits: alpha, beta, beta', and beta''. When a (nuclear-encoded) sigma factor is associated with the core the holoenzyme is formed, which can initiate transcription. The cofactor is Mg(2+). Requires Zn(2+) as cofactor.

The protein resides in the plastid. The protein localises to the chloroplast. The catalysed reaction is RNA(n) + a ribonucleoside 5'-triphosphate = RNA(n+1) + diphosphate. DNA-dependent RNA polymerase catalyzes the transcription of DNA into RNA using the four ribonucleoside triphosphates as substrates. The sequence is that of DNA-directed RNA polymerase subunit beta' from Gossypium hirsutum (Upland cotton).